A 516-amino-acid polypeptide reads, in one-letter code: DNA topoisomerase large subunit (516 aa).

128-136 (VTGGMNGVG) contacts ATP. The DNA-binding element occupies 369–400 (AALARKLAAEKAAETKAAKKASKAKVHKHIKA).

This sequence belongs to the type II topoisomerase family. In terms of assembly, part of the DNA topoisomerase complex made of gp39, gp52 and gp60. Requires Mg(2+) as cofactor.

The enzyme catalyses ATP-dependent breakage, passage and rejoining of double-stranded DNA.. In terms of biological role, large subunit of the DNA topoisomerase that untwists superhelical DNA. Controls of topological states of double-stranded DNA by transient breakage and subsequent rejoining of DNA strands. The protein is DNA topoisomerase large subunit (39) of Escherichia coli (Bacteriophage T4).